Consider the following 102-residue polypeptide: NADH-quinone oxidoreductase subunit K (102 aa).

3 consecutive transmembrane segments (helical) span residues 6–26 (LTGF…GVLA), 30–50 (ILFQ…AFIA), and 63–83 (MFVL…ALFL).

This sequence belongs to the complex I subunit 4L family. NDH-1 is composed of 14 different subunits. Subunits NuoA, H, J, K, L, M, N constitute the membrane sector of the complex.

The protein resides in the cell inner membrane. The enzyme catalyses a quinone + NADH + 5 H(+)(in) = a quinol + NAD(+) + 4 H(+)(out). Its function is as follows. NDH-1 shuttles electrons from NADH, via FMN and iron-sulfur (Fe-S) centers, to quinones in the respiratory chain. The immediate electron acceptor for the enzyme in this species is believed to be ubiquinone. Couples the redox reaction to proton translocation (for every two electrons transferred, four hydrogen ions are translocated across the cytoplasmic membrane), and thus conserves the redox energy in a proton gradient. The protein is NADH-quinone oxidoreductase subunit K of Rhodopseudomonas palustris (strain BisA53).